Reading from the N-terminus, the 277-residue chain is Outer plastidial membrane protein porin (277 aa).

This sequence belongs to the eukaryotic mitochondrial porin (TC 1.B.8.1) family.

It localises to the plastid outer membrane. Functionally, forms a channel through the cell membrane that allows diffusion of small hydrophilic molecules. The channel adopts an open conformation at low or zero membrane potential and a closed conformation at potentials above 30-40 mV. The open state has a weak anion selectivity whereas the closed state is cation-selective. The sequence is that of Outer plastidial membrane protein porin (POR1) from Zea mays (Maize).